The sequence spans 374 residues: MSKGIVLLAAGGTGGHVFPAEALAFKLKERGYSVHLVTDSRAERYAGKFPAEEIHVVPSATIGSKNPVAVARSLWTLWSGMRAAKRLIQRLKPVIVVGFGGYPTVPPLLAATRLGVASMLHEQNAVMGRANKALAPRVKAIAGGFLPESGDVFSDKTVATGNPVRPAILAAAEQPYLPSHPGEPFNLVVFGGSQGAQYFSKAMPTAISLLDDGLRARLRVTQQVRPEDMEMVSGCVAKLEMGADIAPFFNDMAERLAQAHLVICRSGASTVSEISVIGRPAILVPYPHALDHDQAANAAALAATGGAKVIPQSELSPERIASILSHVMNDPDKLSHMAAAAKLAGKPDAANLLADMVEAIAAGKTVSEFKRTRA.

UDP-N-acetyl-alpha-D-glucosamine is bound by residues threonine 13–glycine 15, asparagine 124, arginine 165, serine 193, and glutamine 294.

This sequence belongs to the glycosyltransferase 28 family. MurG subfamily.

It localises to the cell inner membrane. The enzyme catalyses di-trans,octa-cis-undecaprenyl diphospho-N-acetyl-alpha-D-muramoyl-L-alanyl-D-glutamyl-meso-2,6-diaminopimeloyl-D-alanyl-D-alanine + UDP-N-acetyl-alpha-D-glucosamine = di-trans,octa-cis-undecaprenyl diphospho-[N-acetyl-alpha-D-glucosaminyl-(1-&gt;4)]-N-acetyl-alpha-D-muramoyl-L-alanyl-D-glutamyl-meso-2,6-diaminopimeloyl-D-alanyl-D-alanine + UDP + H(+). It functions in the pathway cell wall biogenesis; peptidoglycan biosynthesis. Its function is as follows. Cell wall formation. Catalyzes the transfer of a GlcNAc subunit on undecaprenyl-pyrophosphoryl-MurNAc-pentapeptide (lipid intermediate I) to form undecaprenyl-pyrophosphoryl-MurNAc-(pentapeptide)GlcNAc (lipid intermediate II). The sequence is that of UDP-N-acetylglucosamine--N-acetylmuramyl-(pentapeptide) pyrophosphoryl-undecaprenol N-acetylglucosamine transferase from Rhizobium etli (strain ATCC 51251 / DSM 11541 / JCM 21823 / NBRC 15573 / CFN 42).